The sequence spans 385 residues: Serine/threonine-protein kinase H2 (385 aa).

The Protein kinase domain maps to 63 to 320 (YDIKALIGTG…AGQALDHPWV (258 aa)). Residues 69-77 (IGTGSFSRV) and K92 contribute to the ATP site. The segment at 342–367 (QRASPHSQSPGSAQSSKSHYSHKSRH) is disordered. Positions 344–359 (ASPHSQSPGSAQSSKS) are enriched in low complexity.

The protein belongs to the protein kinase superfamily. CAMK Ser/Thr protein kinase family.

The catalysed reaction is L-seryl-[protein] + ATP = O-phospho-L-seryl-[protein] + ADP + H(+). It carries out the reaction L-threonyl-[protein] + ATP = O-phospho-L-threonyl-[protein] + ADP + H(+). The polypeptide is Serine/threonine-protein kinase H2 (PSKH2) (Homo sapiens (Human)).